A 446-amino-acid chain; its full sequence is Exodeoxyribonuclease 7 large subunit (446 aa).

This sequence belongs to the XseA family. In terms of assembly, heterooligomer composed of large and small subunits.

Its subcellular location is the cytoplasm. The catalysed reaction is Exonucleolytic cleavage in either 5'- to 3'- or 3'- to 5'-direction to yield nucleoside 5'-phosphates.. Bidirectionally degrades single-stranded DNA into large acid-insoluble oligonucleotides, which are then degraded further into small acid-soluble oligonucleotides. The polypeptide is Exodeoxyribonuclease 7 large subunit (Ligilactobacillus salivarius (strain UCC118) (Lactobacillus salivarius)).